Reading from the N-terminus, the 353-residue chain is O-antigen biosynthesis glycosyltransferase WclY (353 aa).

A helical membrane pass occupies residues 116-136 (SLIWGLLWCSIWLFFDKLVIL). UDP contacts are provided by Asn-190 and Glu-271. An E(x7)E glycosyltransferase motif motif is present at residues 263-271 (EGFGLTVLE).

This sequence belongs to the glycosyltransferase group 1 family. Glycosyltransferase 4 subfamily.

Its subcellular location is the membrane. Its pathway is bacterial outer membrane biogenesis; LPS O-antigen biosynthesis. Involved in the assembly of the O-repeating unit during O-antigen biosynthesis. N-acetylglucosamine transferase accountable for the alpha-D-GlcNAc-1,4-beta-D-Gal linkage within the O-antigen. This is O-antigen biosynthesis glycosyltransferase WclY from Escherichia coli.